A 202-amino-acid polypeptide reads, in one-letter code: Syndecan-4 (202 aa).

The signal sequence occupies residues 1–22 (MASPRLLALLLLLVGAFNAAAA). Residues 23 to 152 (ESIRETEVIN…NIFERTEVLS (130 aa)) are Extracellular-facing. Disordered regions lie at residues 41–75 (YFSG…GPED) and 87–112 (VPLD…ELEE). Residue S43 is glycosylated (O-linked (Xyl...) (glycosaminoglycan) serine). Positions 46–63 (LPDDEDVGGPGQEPDDFE) are enriched in acidic residues. O-linked (Xyl...) (glycosaminoglycan) serine glycosylation is found at S65 and S67. A helical transmembrane segment spans residues 153–173 (ALIVGGIVGILFAVFLVLLLV). Residues 174 to 202 (YRMKKKDEGSYDLGKKPIYKKAPTNEFYA) lie on the Cytoplasmic side of the membrane.

This sequence belongs to the syndecan proteoglycan family. In terms of assembly, homodimer. Interacts with CDCP1 and SDCBP. Interacts (via its cytoplasmic domain) with GIPC (via its PDZ domain). Interacts (via its cytoplasmic domain) with NUDT16L1. Interacts with DNM2; this interaction is markedly enhanced at focal ahesion site upon induction of focal adhesions and stress-fiber formation. Shedding, cleavage of the extracellular domain to release a soluble form, is enhanced by a number of factors such as heparanase, growth factor receptor action for example by thrombin or EGF. Physiological events such as stress or wound healing can activate the shedding. PMA-mediated shedding is inhibited by TIMP3. In terms of processing, O-glycosylated; contains both chondroitin sulfate and heparan sulfate. Ser-43, Ser-65 and Ser-67 can all be modified by either chondroitin sulfate or heparan sulfate, and the protein exists in forms that contain only chondroitin sulfate, only heparan sulfate and both chondroitin sulfate and heparan sulfate.

Its subcellular location is the membrane. The protein localises to the secreted. Cell surface proteoglycan which regulates exosome biogenesis in concert with SDCBP and PDCD6IP. This is Syndecan-4 from Sus scrofa (Pig).